We begin with the raw amino-acid sequence, 135 residues long: UPF0355 protein MRSA252 (135 aa).

Belongs to the UPF0355 family.

The sequence is that of UPF0355 protein MRSA252 from Staphylococcus aureus (strain MRSA252).